A 942-amino-acid polypeptide reads, in one-letter code: ATP-dependent RNA helicase DDX42 (942 aa).

Residues 1 to 18 (MNWNKGGPGTKRGFGFGG) are compositionally biased toward gly residues. The interval 1–114 (MNWNKGGPGT…KPIDSDSDDD (114 aa)) is disordered. Lysine 5 is subject to N6-acetyllysine. Omega-N-methylarginine is present on arginine 12. The span at 35–52 (SHSAFGATSSSSGFGKSA) shows a compositional bias: low complexity. Serine 58 is subject to Phosphoserine. Positions 70–84 (DEENAYFEDEEEDSS) are enriched in acidic residues. 4 positions are modified to phosphoserine: serine 96, serine 104, serine 109, and serine 111. Positions 116 to 157 (LEAFMAEVEDQAARDMKRLEEKDKERKNVKGIRDDIEEEDDQ) form a coiled coil. Residues 182–203 (EYDSDGNPIAPTKKIIDPLPPI) are disordered. Serine 185 is modified (phosphoserine). The Q motif motif lies at 253-281 (SSFAHFGFDEQLMHQIRKSEYTQPTPIQC). The Helicase ATP-binding domain maps to 284–459 (VPVALSGRDM…RDILIDPIRV (176 aa)). 297–304 (AKTGSGKT) contributes to the ATP binding site. The DEAD box motif lies at 407 to 410 (DEAD). The Helicase C-terminal domain occupies 487–632 (WLTRRLVEFT…HVSKELLDLA (146 aa)). Composition is skewed to polar residues over residues 737-760 (LNSV…TSAT) and 786-798 (GVNN…NSRE). Disordered stretches follow at residues 737–762 (LNSV…ATKG) and 783–942 (GAQG…RWDS). A necessary for interaction with TP53BP2 region spans residues 738–833 (NSVPTNSAQQ…TGNRHSDSPR (96 aa)). Serine 754 carries the post-translational modification Phosphoserine. Basic and acidic residues predominate over residues 820–924 (SHGETGNRHS…KVDSKTDKTA (105 aa)). Residue lysine 899 forms a Glycyl lysine isopeptide (Lys-Gly) (interchain with G-Cter in SUMO2) linkage.

It belongs to the DEAD box helicase family. DDX42 subfamily. Transient component of the SF3B subcomplex of the 17S U2 SnRNP complex. Interacts (via the C-terminus) with TP53BP2; the interaction is not inhibitied by TP53BP2 ubiquitination and is independent of p53/TP53.

The protein localises to the cytoplasm. Its subcellular location is the nucleus. The enzyme catalyses ATP + H2O = ADP + phosphate + H(+). In terms of biological role, ATP-dependent RNA helicase that binds to partially double-stranded RNAs (dsRNAs) in order to unwind RNA secondary structures. Unwinding is promoted in the presence of single-strand binding proteins. Also mediates RNA duplex formation thereby displacing the single-strand RNA binding protein. ATP and ADP modulate its activity: ATP binding and hydrolysis by DDX42 triggers RNA strand separation, whereas the ADP-bound form of the protein triggers annealing of complementary RNA strands. Required for assembly of the 17S U2 SnRNP complex of the spliceosome, a large ribonucleoprotein complex that removes introns from transcribed pre-mRNAs: DDX42 associates transiently with the SF3B subcomplex of the 17S U2 SnRNP complex and is released after fulfilling its role in the assembly of 17S U2 SnRNP. Involved in the survival of cells by interacting with TP53BP2 and thereby counteracting the apoptosis-stimulating activity of TP53BP2. Relocalizes TP53BP2 to the cytoplasm. The protein is ATP-dependent RNA helicase DDX42 (DDX42) of Pongo abelii (Sumatran orangutan).